The primary structure comprises 230 residues: PsbP-like protein 1, chloroplastic (230 aa).

Belongs to the PsbP family.

The protein localises to the plastid. It is found in the chloroplast thylakoid lumen. Required for efficient repair of photodamaged PSII, but not tightly associated with the complex. The polypeptide is PsbP-like protein 1, chloroplastic (PPL1) (Arabidopsis thaliana (Mouse-ear cress)).